The primary structure comprises 214 residues: HFQNYSSTKEGSLYSISLWGNRIPKGVNKDFVLSTTKSEVSFFSQNISISKGQGNTRNRTGSFSTSFGSKNVFTYPHETGNTMLFPLLILLLFTFFIGFIGIPFDNRTMDNGIVRLTILSKWLIPSINFTQESSNFSINSYEFITNAISSVSLAILGLFIAYIFYGSAYSFFQNLDLQNSFYKGSPKKNFFYQVKKKIYSWSYNRGYIDIFYSX.

2 helical membrane-spanning segments follow: residues 84 to 104 and 152 to 172; these read LFPL…GIPF and SLAI…YSFF.

It belongs to the complex I subunit 5 family. NDH is composed of at least 16 different subunits, 5 of which are encoded in the nucleus.

It is found in the plastid. The protein resides in the chloroplast thylakoid membrane. It catalyses the reaction a plastoquinone + NADH + (n+1) H(+)(in) = a plastoquinol + NAD(+) + n H(+)(out). It carries out the reaction a plastoquinone + NADPH + (n+1) H(+)(in) = a plastoquinol + NADP(+) + n H(+)(out). NDH shuttles electrons from NAD(P)H:plastoquinone, via FMN and iron-sulfur (Fe-S) centers, to quinones in the photosynthetic chain and possibly in a chloroplast respiratory chain. The immediate electron acceptor for the enzyme in this species is believed to be plastoquinone. Couples the redox reaction to proton translocation, and thus conserves the redox energy in a proton gradient. The sequence is that of NAD(P)H-quinone oxidoreductase subunit 5, chloroplastic (ndhF) from Brachypodium pinnatum (Tor grass).